Consider the following 325-residue polypeptide: L-lactate dehydrogenase (325 aa).

NAD(+) contacts are provided by residues Val21, Asp42, Lys47, Tyr73, and 87-88; that span reads GA. Substrate contacts are provided by residues Gln90, Arg96, and 128 to 131; that span reads NPVD. NAD(+)-binding positions include 126 to 128 and Ser151; that span reads ATN. 156–159 contacts substrate; it reads DTAR. Arg161 and His176 together coordinate beta-D-fructose 1,6-bisphosphate. Residue His183 is the Proton acceptor of the active site. The residue at position 228 (Tyr228) is a Phosphotyrosine. Thr237 contacts substrate.

The protein belongs to the LDH/MDH superfamily. LDH family. As to quaternary structure, homotetramer.

It localises to the cytoplasm. It carries out the reaction (S)-lactate + NAD(+) = pyruvate + NADH + H(+). Its pathway is fermentation; pyruvate fermentation to lactate; (S)-lactate from pyruvate: step 1/1. Its activity is regulated as follows. Allosterically activated by fructose 1,6-bisphosphate (FBP). Functionally, catalyzes the conversion of lactate to pyruvate. This chain is L-lactate dehydrogenase, found in Shouchella clausii (strain KSM-K16) (Alkalihalobacillus clausii).